A 72-amino-acid chain; its full sequence is Translation initiation factor IF-1 (72 aa).

One can recognise an S1-like domain in the interval 1–72 (MSKDDSIEFE…TKGRITYRMK (72 aa)).

This sequence belongs to the IF-1 family. As to quaternary structure, component of the 30S ribosomal translation pre-initiation complex which assembles on the 30S ribosome in the order IF-2 and IF-3, IF-1 and N-formylmethionyl-tRNA(fMet); mRNA recruitment can occur at any time during PIC assembly.

Its subcellular location is the cytoplasm. Its function is as follows. One of the essential components for the initiation of protein synthesis. Stabilizes the binding of IF-2 and IF-3 on the 30S subunit to which N-formylmethionyl-tRNA(fMet) subsequently binds. Helps modulate mRNA selection, yielding the 30S pre-initiation complex (PIC). Upon addition of the 50S ribosomal subunit IF-1, IF-2 and IF-3 are released leaving the mature 70S translation initiation complex. This Xanthomonas campestris pv. campestris (strain 8004) protein is Translation initiation factor IF-1.